The sequence spans 72 residues: Heat-stable enterotoxin A3/A4 (72 aa).

Residues 1 to 19 (MKKSILFIFLSVLSFSPFA) form the signal peptide. A propeptide spanning residues 20 to 53 (QDAKPVESSKEKITLESKKCNIAKKSNKSGPESM) is cleaved from the precursor. Cystine bridges form between Cys59–Cys64, Cys60–Cys68, and Cys63–Cys71.

It belongs to the heat-stable enterotoxin family.

The protein resides in the secreted. Toxin which activates the particulate form of guanylate cyclase and increases cyclic GMP levels within the host intestinal epithelial cells. The protein is Heat-stable enterotoxin A3/A4 (sta3) of Escherichia coli.